We begin with the raw amino-acid sequence, 1373 residues long: DNA-directed RNA polymerase subunit beta (1373 aa).

This sequence belongs to the RNA polymerase beta chain family. In terms of assembly, the RNAP catalytic core consists of 2 alpha, 1 beta, 1 beta' and 1 omega subunit. When a sigma factor is associated with the core the holoenzyme is formed, which can initiate transcription.

The enzyme catalyses RNA(n) + a ribonucleoside 5'-triphosphate = RNA(n+1) + diphosphate. Functionally, DNA-dependent RNA polymerase catalyzes the transcription of DNA into RNA using the four ribonucleoside triphosphates as substrates. This is DNA-directed RNA polymerase subunit beta from Rickettsia akari (strain Hartford).